A 323-amino-acid polypeptide reads, in one-letter code: tRNA dimethylallyltransferase (323 aa).

Residue 12–19 (GPTAAGKT) coordinates ATP. 14–19 (TAAGKT) provides a ligand contact to substrate. 2 interaction with substrate tRNA regions span residues 37–40 (DSAL) and 161–165 (QRLIR).

This sequence belongs to the IPP transferase family. Monomer. Mg(2+) serves as cofactor.

It catalyses the reaction adenosine(37) in tRNA + dimethylallyl diphosphate = N(6)-dimethylallyladenosine(37) in tRNA + diphosphate. Catalyzes the transfer of a dimethylallyl group onto the adenine at position 37 in tRNAs that read codons beginning with uridine, leading to the formation of N6-(dimethylallyl)adenosine (i(6)A). In Pseudomonas savastanoi pv. phaseolicola (strain 1448A / Race 6) (Pseudomonas syringae pv. phaseolicola (strain 1448A / Race 6)), this protein is tRNA dimethylallyltransferase.